A 118-amino-acid chain; its full sequence is Large ribosomal subunit protein bL20 (118 aa).

Belongs to the bacterial ribosomal protein bL20 family.

In terms of biological role, binds directly to 23S ribosomal RNA and is necessary for the in vitro assembly process of the 50S ribosomal subunit. It is not involved in the protein synthesizing functions of that subunit. The sequence is that of Large ribosomal subunit protein bL20 from Enterobacter sp. (strain 638).